Here is a 431-residue protein sequence, read N- to C-terminus: NADH-quinone oxidoreductase subunit D 2 (431 aa).

The tract at residues 1 to 27 (MNDHKGLGGLDTEATPGSFGAGEPPRA) is disordered.

Belongs to the complex I 49 kDa subunit family. As to quaternary structure, NDH-1 is composed of 14 different subunits. Subunits NuoB, C, D, E, F, and G constitute the peripheral sector of the complex.

The protein resides in the cell inner membrane. It carries out the reaction a quinone + NADH + 5 H(+)(in) = a quinol + NAD(+) + 4 H(+)(out). Functionally, NDH-1 shuttles electrons from NADH, via FMN and iron-sulfur (Fe-S) centers, to quinones in the respiratory chain. The immediate electron acceptor for the enzyme in this species is believed to be ubiquinone. Couples the redox reaction to proton translocation (for every two electrons transferred, four hydrogen ions are translocated across the cytoplasmic membrane), and thus conserves the redox energy in a proton gradient. The polypeptide is NADH-quinone oxidoreductase subunit D 2 (Anaeromyxobacter sp. (strain Fw109-5)).